Reading from the N-terminus, the 257-residue chain is Pimeloyl-[acyl-carrier protein] methyl ester esterase (257 aa).

The AB hydrolase-1 domain maps to Leu16–Ser240. Substrate is bound by residues Trp22, Ser82–Leu83, and Phe143–Gln147. The Nucleophile role is filled by Ser82. Catalysis depends on residues Asp207 and His235. A substrate-binding site is contributed by His235.

It belongs to the AB hydrolase superfamily. Carboxylesterase BioH family. Monomer.

It is found in the cytoplasm. It catalyses the reaction 6-carboxyhexanoyl-[ACP] methyl ester + H2O = 6-carboxyhexanoyl-[ACP] + methanol + H(+). It participates in cofactor biosynthesis; biotin biosynthesis. Functionally, the physiological role of BioH is to remove the methyl group introduced by BioC when the pimeloyl moiety is complete. It allows to synthesize pimeloyl-ACP via the fatty acid synthetic pathway through the hydrolysis of the ester bonds of pimeloyl-ACP esters. The chain is Pimeloyl-[acyl-carrier protein] methyl ester esterase from Aliivibrio fischeri (strain ATCC 700601 / ES114) (Vibrio fischeri).